Consider the following 393-residue polypeptide: Methylthioribose kinase (393 aa).

ATP-binding positions include asparagine 38, lysine 53, and 107–109; that span reads EDL. Residue aspartate 225 participates in substrate binding. 242–244 contributes to the ATP binding site; that stretch reads DPE. Residue arginine 332 participates in substrate binding.

Belongs to the methylthioribose kinase family. In terms of assembly, homodimer.

It carries out the reaction 5-(methylsulfanyl)-D-ribose + ATP = 5-(methylsulfanyl)-alpha-D-ribose 1-phosphate + ADP + H(+). The protein operates within amino-acid biosynthesis; L-methionine biosynthesis via salvage pathway; S-methyl-5-thio-alpha-D-ribose 1-phosphate from S-methyl-5'-thioadenosine (hydrolase route): step 2/2. Functionally, catalyzes the phosphorylation of methylthioribose into methylthioribose-1-phosphate. In Bacillus cereus (strain ATCC 10987 / NRS 248), this protein is Methylthioribose kinase.